The primary structure comprises 347 residues: MDNDRQKALDTVIKNMEKSFGKGAVMKLGDNIGRRVSTTSTGSVTLDNALGVGGYPKGRIIEIYGPESSGKTTVALHAIAEVQSNGGVAAFIDAEHALDPEYAQALGVDIDNLYLSQPDHGEQGLEIAEAFVRSGAVDIVVVDSVAALTPKAEIEGEMGDTHVGLQARLMSQALRKLSGAISKSNTTAIFINQIREKVGVMFGNPETTPGGRALKFYSSVRLEVRRAEQLKQGQEIVGNRTKIKVVKNKVAPPFRVAEVDIMYGQGISKEGELIDLGVENDIVDKSGAWYSYNGERMGQGKENVKMYLKENPQIKEEIDRKLREKLGISDGDVEETEDAPKSLFDEE.

65-72 (GPESSGKT) contributes to the ATP binding site. Positions 325–347 (KLGISDGDVEETEDAPKSLFDEE) are disordered. The span at 338-347 (DAPKSLFDEE) shows a compositional bias: basic and acidic residues.

The protein belongs to the RecA family.

The protein localises to the cytoplasm. Functionally, can catalyze the hydrolysis of ATP in the presence of single-stranded DNA, the ATP-dependent uptake of single-stranded DNA by duplex DNA, and the ATP-dependent hybridization of homologous single-stranded DNAs. It interacts with LexA causing its activation and leading to its autocatalytic cleavage. In Staphylococcus aureus (strain Mu3 / ATCC 700698), this protein is Protein RecA.